Reading from the N-terminus, the 127-residue chain is MENIGIDLVEIKKIKKIGKDILAARILSSEEHQIYQIIQNPQSQLTFLAGRWASKEALFKAFQTPQKIDPTCQNYCNWSILNDKKGAPYVKNNTCTTFFNPILISITHTDNYALALVIVKKLPQSTS.

2 residues coordinate Mg(2+): aspartate 7 and glutamate 56.

It belongs to the P-Pant transferase superfamily. AcpS family. It depends on Mg(2+) as a cofactor.

The protein resides in the cytoplasm. The catalysed reaction is apo-[ACP] + CoA = holo-[ACP] + adenosine 3',5'-bisphosphate + H(+). Its function is as follows. Transfers the 4'-phosphopantetheine moiety from coenzyme A to a Ser of acyl-carrier-protein. The protein is Holo-[acyl-carrier-protein] synthase of Onion yellows phytoplasma (strain OY-M).